Here is a 341-residue protein sequence, read N- to C-terminus: Cell division protein ZipA (341 aa).

Over 1 to 6 (MENLQL) the chain is Periplasmic. A helical membrane pass occupies residues 7–27 (VLFVLGAIAIVAVLVHGFWSI). The Cytoplasmic segment spans residues 28 to 341 (RKQQPKSLKE…YLQRIRTQNS (314 aa)). Disordered regions lie at residues 35–134 (LKES…PVLS) and 157–201 (QSSL…PEPE). Positions 90-100 (TLTSEGQMDSS) are enriched in polar residues. The segment covering 175 to 190 (SIEVPEPVSEPVLESV) has biased composition (low complexity). The span at 192-201 (EPEPVAPEPE) shows a compositional bias: pro residues.

Belongs to the ZipA family. As to quaternary structure, interacts with FtsZ via their C-terminal domains.

The protein localises to the cell inner membrane. In terms of biological role, essential cell division protein that stabilizes the FtsZ protofilaments by cross-linking them and that serves as a cytoplasmic membrane anchor for the Z ring. Also required for the recruitment to the septal ring of downstream cell division proteins. The sequence is that of Cell division protein ZipA from Shewanella sediminis (strain HAW-EB3).